The following is a 38-amino-acid chain: Photosystem II reaction center protein L (38 aa).

The helical transmembrane segment at 17–37 threads the bilayer; that stretch reads SLYWGLLLIFVLAVLFSSYIF.

It belongs to the PsbL family. In terms of assembly, PSII is composed of 1 copy each of membrane proteins PsbA, PsbB, PsbC, PsbD, PsbE, PsbF, PsbH, PsbI, PsbJ, PsbK, PsbL, PsbM, PsbT, PsbX, PsbY, PsbZ, Psb30/Ycf12, at least 3 peripheral proteins of the oxygen-evolving complex and a large number of cofactors. It forms dimeric complexes.

It localises to the plastid. Its subcellular location is the chloroplast thylakoid membrane. In terms of biological role, one of the components of the core complex of photosystem II (PSII). PSII is a light-driven water:plastoquinone oxidoreductase that uses light energy to abstract electrons from H(2)O, generating O(2) and a proton gradient subsequently used for ATP formation. It consists of a core antenna complex that captures photons, and an electron transfer chain that converts photonic excitation into a charge separation. This subunit is found at the monomer-monomer interface and is required for correct PSII assembly and/or dimerization. This is Photosystem II reaction center protein L from Tupiella akineta (Green alga).